The chain runs to 450 residues: Serine--tRNA ligase, cytoplasmic (450 aa).

238-240 (TSE) provides a ligand contact to L-serine. ATP-binding positions include 271–273 (RRE) and V287. E294 contributes to the L-serine binding site. Residue 358–361 (ELVS) participates in ATP binding. T396 is an L-serine binding site.

It belongs to the class-II aminoacyl-tRNA synthetase family. Type-1 seryl-tRNA synthetase subfamily. As to quaternary structure, homodimer. The tRNA molecule binds across the dimer.

It is found in the cytoplasm. The protein localises to the cytosol. It carries out the reaction tRNA(Ser) + L-serine + ATP = L-seryl-tRNA(Ser) + AMP + diphosphate + H(+). Its function is as follows. Catalyzes the attachment of serine to tRNA(Ser) in a two-step reaction: serine is first activated by ATP to form Ser-AMP and then transferred to the acceptor end of tRNA(Ser). This Schizosaccharomyces pombe (strain 972 / ATCC 24843) (Fission yeast) protein is Serine--tRNA ligase, cytoplasmic.